A 216-amino-acid chain; its full sequence is Adenylate kinase (216 aa).

Position 10–15 (10–15) interacts with ATP; sequence GAGKGT. Residues 30–59 form an NMP region; sequence STGDMLRAAVSAQTEVGKRAKAVMDAGKLV. Residues T31, R36, 57–59, 85–88, and Q92 contribute to the AMP site; these read KLV and GFPR. The interval 126–163 is LID; the sequence is GRYTCANCGTGYHDENLKPKVEGVCDKCGSTHFKRRPD. R127 serves as a coordination point for ATP. Positions 130, 133, 150, and 153 each coordinate Zn(2+). Residues R160 and R172 each contribute to the AMP site. A200 contacts ATP.

Belongs to the adenylate kinase family. In terms of assembly, monomer.

It is found in the cytoplasm. It catalyses the reaction AMP + ATP = 2 ADP. It functions in the pathway purine metabolism; AMP biosynthesis via salvage pathway; AMP from ADP: step 1/1. In terms of biological role, catalyzes the reversible transfer of the terminal phosphate group between ATP and AMP. Plays an important role in cellular energy homeostasis and in adenine nucleotide metabolism. The sequence is that of Adenylate kinase from Allorhizobium ampelinum (strain ATCC BAA-846 / DSM 112012 / S4) (Agrobacterium vitis (strain S4)).